The sequence spans 429 residues: MRDELNQGLIDYLKASPTPFHATASLAQTLQAAGYKALDEREPWHTEAGGRYYVTRNDSAIIAFQLGGKPLAEHGLRLVGAHTDSPCLRVKPQPELQRQGFWQLGVEVYGGALLAPWFDRDLSLAGRVTYSRDGRIESQLIDFRQPIACIPNLAIHLNREANQGWAINAQNELPPILAQIASQESPDFRALLADQLGREHGLVADVVLDFELSFYDTQPAAVIGLNGDFIAGARLDNLLSCFAGLQALFDAGPDETCVLVCTDHEEVGSASMCGADGPFLEQVLRRLLPEEDDFQRAINRSLLISADNAHAVHPNYADKHDGNHGPKLNAGPVIKVNSNQRYATSSETAGFFRHLCLENEVPVQSFVTRSDMGCGSTIGPITASQLGVRTVDIGLPTFAMHSIRELAGSQDLAHLVKVLGAFYSSAELP.

Zn(2+)-binding residues include histidine 82, histidine 156, and histidine 401.

Belongs to the peptidase M18 family. Zn(2+) is required as a cofactor.

The chain is Probable M18 family aminopeptidase 2 from Stutzerimonas stutzeri (strain A1501) (Pseudomonas stutzeri).